The sequence spans 371 residues: Anhydro-N-acetylmuramic acid kinase (371 aa).

An ATP-binding site is contributed by 15–22 (GTSLDGVD).

The protein belongs to the anhydro-N-acetylmuramic acid kinase family.

The enzyme catalyses 1,6-anhydro-N-acetyl-beta-muramate + ATP + H2O = N-acetyl-D-muramate 6-phosphate + ADP + H(+). It functions in the pathway amino-sugar metabolism; 1,6-anhydro-N-acetylmuramate degradation. Its pathway is cell wall biogenesis; peptidoglycan recycling. Catalyzes the specific phosphorylation of 1,6-anhydro-N-acetylmuramic acid (anhMurNAc) with the simultaneous cleavage of the 1,6-anhydro ring, generating MurNAc-6-P. Is required for the utilization of anhMurNAc either imported from the medium or derived from its own cell wall murein, and thus plays a role in cell wall recycling. The protein is Anhydro-N-acetylmuramic acid kinase of Cereibacter sphaeroides (strain ATCC 17023 / DSM 158 / JCM 6121 / CCUG 31486 / LMG 2827 / NBRC 12203 / NCIMB 8253 / ATH 2.4.1.) (Rhodobacter sphaeroides).